Consider the following 376-residue polypeptide: UDP-N-acetylglucosamine 2-epimerase (376 aa).

Substrate is bound by residues Arg-10, Lys-15, Asp-95, Glu-117, His-213, Gln-271, Phe-276, 290-292 (SGG), Glu-296, and Arg-313.

It belongs to the UDP-N-acetylglucosamine 2-epimerase family. In terms of assembly, homodimer.

Its subcellular location is the cytoplasm. The enzyme catalyses UDP-N-acetyl-alpha-D-glucosamine = UDP-N-acetyl-alpha-D-mannosamine. It participates in bacterial outer membrane biogenesis; enterobacterial common antigen biosynthesis. Its function is as follows. Catalyzes the reversible epimerization at C-2 of UDP-N-acetylglucosamine (UDP-GlcNAc) and thereby provides bacteria with UDP-N-acetylmannosamine (UDP-ManNAc), the activated donor of ManNAc residues. The polypeptide is UDP-N-acetylglucosamine 2-epimerase (Yersinia pestis).